The sequence spans 143 residues: ATP synthase subunit b' (143 aa).

Residues 6 to 26 (ATLPLMALQFVVLAFLLNAIF) traverse the membrane as a helical segment.

This sequence belongs to the ATPase B chain family. As to quaternary structure, F-type ATPases have 2 components, F(1) - the catalytic core - and F(0) - the membrane proton channel. F(1) has five subunits: alpha(3), beta(3), gamma(1), delta(1), epsilon(1). F(0) has four main subunits: a(1), b(1), b'(1) and c(10-14). The alpha and beta chains form an alternating ring which encloses part of the gamma chain. F(1) is attached to F(0) by a central stalk formed by the gamma and epsilon chains, while a peripheral stalk is formed by the delta, b and b' chains.

It localises to the cellular thylakoid membrane. Its function is as follows. F(1)F(0) ATP synthase produces ATP from ADP in the presence of a proton or sodium gradient. F-type ATPases consist of two structural domains, F(1) containing the extramembraneous catalytic core and F(0) containing the membrane proton channel, linked together by a central stalk and a peripheral stalk. During catalysis, ATP synthesis in the catalytic domain of F(1) is coupled via a rotary mechanism of the central stalk subunits to proton translocation. In terms of biological role, component of the F(0) channel, it forms part of the peripheral stalk, linking F(1) to F(0). The b'-subunit is a diverged and duplicated form of b found in plants and photosynthetic bacteria. The protein is ATP synthase subunit b' of Synechocystis sp. (strain ATCC 27184 / PCC 6803 / Kazusa).